The following is a 554-amino-acid chain: (+)-delta-cadinene synthase isozyme XC14 (554 aa).

The span at 1-16 (MASQVSQMPSSSPLSS) shows a compositional bias: low complexity. A disordered region spans residues 1–23 (MASQVSQMPSSSPLSSNKDEMRP). Residues D307, D311, and D451 each contribute to the Mg(2+) site. The DDXXD motif motif lies at 307–311 (DDTYD).

The protein belongs to the terpene synthase family. Mg(2+) serves as cofactor.

It carries out the reaction (2E,6E)-farnesyl diphosphate = (1S,8aR)-delta-cadinene + diphosphate. The protein operates within secondary metabolite biosynthesis; terpenoid biosynthesis. In terms of biological role, responsible for the cyclization of trans,trans-farnesyl diphosphate (FPP) to (+)-delta cadinene. The protein is (+)-delta-cadinene synthase isozyme XC14 of Gossypium arboreum (Tree cotton).